The sequence spans 518 residues: Cytochrome P450 709B3 (518 aa).

A helical transmembrane segment spans residues 3–23 (LISTINLLTIVLLLFVVSKIW). Cysteine 465 contacts heme.

Belongs to the cytochrome P450 family. It depends on heme as a cofactor. Highly expressed in rosette leaves and siliques, and at lower levels in flowers.

It localises to the membrane. In terms of biological role, plays a role in abscisic acid (ABA) and salt stress response. May regulate the salt stress response independently of well-characterized pathways. Does not function as cytokinin hydroxylase in yeast heterologous system. The polypeptide is Cytochrome P450 709B3 (Arabidopsis thaliana (Mouse-ear cress)).